The following is a 292-amino-acid chain: E3 ubiquitin-protein ligase RNF144A (292 aa).

Residues 16–236 (PLVSCKLCLG…YDKGPCRNKL (221 aa)) form a TRIAD supradomain region. Zn(2+) is bound by residues C20, C23, C43, C46, C111, C116, C135, C138, C143, C146, H151, C156, C185, and C188. An RING-type 1 zinc finger spans residues 20–70 (CKLCLGEYPAEQMTTIAQCQCIFCTLCLKQYVELLIKEGLETAISCPDAAC). Residues 91–156 (QRYKKLQFER…KARWHPGQGC (66 aa)) form an IBR-type zinc finger. An RING-type 2; atypical zinc finger spans residues 185–214 (CPKCRVYIERDEGCAQMMCKNCKHAFCWYC). C198 is an active-site residue. Positions 203, 206, 211, 214, 226, and 232 each coordinate Zn(2+). Residues 250–270 (VVGIFAGFGLLLLVASPFLLL) form a helical membrane-spanning segment.

The protein belongs to the RBR family. RNF144 subfamily. In terms of assembly, self-associates. Interacts with UBE2L3. In terms of processing, autoubiquitinated.

The protein resides in the cell membrane. It is found in the cytoplasmic vesicle membrane. It catalyses the reaction [E2 ubiquitin-conjugating enzyme]-S-ubiquitinyl-L-cysteine + [acceptor protein]-L-lysine = [E2 ubiquitin-conjugating enzyme]-L-cysteine + [acceptor protein]-N(6)-ubiquitinyl-L-lysine.. The protein operates within protein modification; protein ubiquitination. E3 ubiquitin-protein ligase which accepts ubiquitin from E2 ubiquitin-conjugating enzymes UBE2L3 and UBE2L6 in the form of a thioester and then directly transfers the ubiquitin to targeted substrates. Mediates the ubiquitination and degradation of the DNA damage kinase PRKDC during DNA damage. Positively regulates DNA virus or exogenous cytosolic DNA-triggered innate immune response by mediating STING1 ubiquitination and increasing its 'Lys-6'-linked ubiquitination and translocation from the endoplasmic reticulum to the Golgi leading to downstream signaling pathways. Plays a positive role in EGF-dependent cell proliferation by prolonging EGF/EGFR signaling during EGF stimulation through EGFR ubiquitination. Increases ERK activity independently of EGFR signaling by promoting polyubiquitination and subsequent degradation of VRK3 in the cytosol. The protein is E3 ubiquitin-protein ligase RNF144A (Rnf144a) of Mus musculus (Mouse).